We begin with the raw amino-acid sequence, 1697 residues long: Histone acetyltransferase HAC1 (1697 aa).

The segment covering 1–16 (MNVQAHMSGQVSNQGT) has biased composition (polar residues). 6 disordered regions span residues 1-45 (MNVQ…LGPS), 202-221 (SNFG…QRNT), 385-439 (SFQA…QQQR), 555-574 (HWQS…SNER), 583-631 (RMSG…GNRD), and 843-901 (IGIA…GKPE). Composition is skewed to low complexity over residues 17-28 (MSQQNGNSQMQN) and 202-217 (SNFG…SMSS). A compositionally biased stretch (polar residues) spans 385-398 (SFQAVSRTSSSLSH). Positions 399–439 (QQQQFQQQPNRFQQQPNQFHQQQQQFLHQQQLKQQSQQQQR) are enriched in low complexity. 2 stretches are compositionally biased toward polar residues: residues 556–571 (WQSQ…NSMS) and 584–628 (MSGT…NGNG). A TAZ-type 1 zinc finger spans residues 629–709 (NRDPRFKNQQ…EPNCPVCIPV (81 aa)). The span at 873-901 (TKVEKEPESLKKENLAESTEHTSKSGKPE) shows a compositional bias: basic and acidic residues. The PHD-type zinc-finger motif lies at 989–1066 (HYFCIPCYNE…EYTCPYCFIA (78 aa)). Residues 1081–1517 (VLGAKDLPRT…VLYHLHNPTA (437 aa)) enclose the CBP/p300-type HAT domain. Residues 1204 to 1206 (LDS), 1223 to 1224 (RT), and Trp-1279 contribute to the acetyl-CoA site. 2 ZZ-type zinc fingers span residues 1399–1462 (HLQP…IMDI) and 1519–1572 (AFVT…SLAD). Residues Cys-1404, Cys-1407, Cys-1419, Cys-1422, Cys-1428, Cys-1431, His-1444, His-1452, Cys-1524, Cys-1527, Cys-1539, Cys-1542, Cys-1548, Cys-1551, His-1560, and His-1562 each coordinate Zn(2+). The TAZ-type 2 zinc-finger motif lies at 1579 to 1662 (EARQLRVLQL…ECHVPRCRDL (84 aa)).

As to expression, rosette leaves, stems and flowers.

The protein localises to the nucleus. It catalyses the reaction L-lysyl-[protein] + acetyl-CoA = N(6)-acetyl-L-lysyl-[protein] + CoA + H(+). Its function is as follows. Acetyltransferase enzyme. Acetylates histones, giving a specific tag for transcriptional activation. This chain is Histone acetyltransferase HAC1 (HAC1), found in Arabidopsis thaliana (Mouse-ear cress).